Consider the following 518-residue polypeptide: ETHYLENE INSENSITIVE 3-like 2 protein (518 aa).

Positions 37–73 (DDLSSDEEMEIEELEKKIWRDKQRLKRLKEMAKNGLG) form a coiled coil. A disordered region spans residues 450–518 (FNHPNDLYRP…GQELPTSWIQ (69 aa)). Polar residues-rich tracts occupy residues 475-484 (PSPSTLNQNL) and 500-518 (GTENNLHNQGQELPTSWIQ).

It belongs to the EIN3 family. Acts as a homodimer to bind the primary ethylene response element.

It localises to the nucleus. Its function is as follows. Probable transcription factor acting as a positive regulator in the ethylene response pathway. Could bind the primary ethylene response element present in the ETHYLENE-RESPONSE-FACTOR1 promoter. The chain is ETHYLENE INSENSITIVE 3-like 2 protein (EIL2) from Arabidopsis thaliana (Mouse-ear cress).